The chain runs to 375 residues: o-succinylbenzoate synthase (375 aa).

K166 serves as the catalytic Proton donor. Mg(2+) contacts are provided by D191, E216, and D241. K265 (proton acceptor) is an active-site residue.

It belongs to the mandelate racemase/muconate lactonizing enzyme family. MenC type 2 subfamily. In terms of assembly, homotetramer. The cofactor is a divalent metal cation.

The enzyme catalyses (1R,6R)-6-hydroxy-2-succinyl-cyclohexa-2,4-diene-1-carboxylate = 2-succinylbenzoate + H2O. The catalysed reaction is N-acetyl-D-methionine = N-acetyl-L-methionine. Its pathway is quinol/quinone metabolism; 1,4-dihydroxy-2-naphthoate biosynthesis; 1,4-dihydroxy-2-naphthoate from chorismate: step 4/7. It participates in quinol/quinone metabolism; menaquinone biosynthesis. Its function is as follows. Converts 2-succinyl-6-hydroxy-2,4-cyclohexadiene-1-carboxylate (SHCHC) to 2-succinylbenzoate (OSB). Also acts as a N-succinylamino acid racemase (NSAR) that catalyzes the racemization of N-succinyl-D/L-phenylalanine. Can catalyze the racemization of a broad range of N-acylamino acids, including N-acetyl-D-methionine, N-formyl-D/L-methionine, N-formyl-D/L-norleucine, N-formyl-D/L-aminobutyric acid, N-formyl-D/L-norvaline, N-formyl-D/L-homophenylalanine, N-carbamoyl-D-methionine and N-carbamoyl-D-norleucine. May be a bifunctional enzyme involved in menaquinone biosynthesis and in an irreversible pathway for the conversion of D- to L-amino acids, thereby facilitating the survival and/or growth of the organism. In Geobacillus stearothermophilus (Bacillus stearothermophilus), this protein is o-succinylbenzoate synthase.